Reading from the N-terminus, the 75-residue chain is Small ribosomal subunit protein bS18c (75 aa).

This sequence belongs to the bacterial ribosomal protein bS18 family. Part of the 30S ribosomal subunit.

It is found in the plastid. The protein resides in the chloroplast. The sequence is that of Small ribosomal subunit protein bS18c from Adiantum capillus-veneris (Maidenhair fern).